The chain runs to 412 residues: Argininosuccinate synthase (412 aa).

ATP is bound by residues 10 to 18 (AYSGGLDTS) and Ala-36. The L-citrulline site is built by Tyr-87 and Ser-92. 115–123 (SHGATGKGN) is an ATP binding site. The L-aspartate site is built by Thr-119, Asn-123, and Asp-124. Residue Asn-123 coordinates L-citrulline. L-citrulline is bound by residues Arg-127, Ser-180, Ser-189, Glu-270, and Tyr-282.

The protein belongs to the argininosuccinate synthase family. In terms of assembly, homotetramer.

The catalysed reaction is L-citrulline + L-aspartate + ATP = 2-(N(omega)-L-arginino)succinate + AMP + diphosphate + H(+). Its pathway is amino-acid biosynthesis; L-arginine biosynthesis; L-arginine from L-ornithine and carbamoyl phosphate: step 2/3. It functions in the pathway nitrogen metabolism; urea cycle; (N(omega)-L-arginino)succinate from L-aspartate and L-citrulline: step 1/1. In Aedes aegypti (Yellowfever mosquito), this protein is Argininosuccinate synthase.